We begin with the raw amino-acid sequence, 115 residues long: T cell receptor beta variable 7-2 (115 aa).

The first 21 residues, 1-21 (MGTRLLFWVAFCLLGADHTGA), serve as a signal peptide directing secretion. Positions 22–115 (GVSQSPSNKV…SAVYLCASSL (94 aa)) constitute an Ig-like domain. Cysteines 42 and 111 form a disulfide.

Alpha-beta TR is a heterodimer composed of an alpha and beta chain; disulfide-linked. The alpha-beta TR is associated with the transmembrane signaling CD3 coreceptor proteins to form the TR-CD3 (TcR or TCR). The assembly of alpha-beta TR heterodimers with CD3 occurs in the endoplasmic reticulum where a single alpha-beta TR heterodimer associates with one CD3D-CD3E heterodimer, one CD3G-CD3E heterodimer and one CD247 homodimer forming a stable octameric structure. CD3D-CD3E and CD3G-CD3E heterodimers preferentially associate with TR alpha and TR beta chains, respectively. The association of the CD247 homodimer is the last step of TcR assembly in the endoplasmic reticulum and is required for transport to the cell surface.

It localises to the cell membrane. V region of the variable domain of T cell receptor (TR) beta chain that participates in the antigen recognition. Alpha-beta T cell receptors are antigen specific receptors which are essential to the immune response and are present on the cell surface of T lymphocytes. Recognize peptide-major histocompatibility (MH) (pMH) complexes that are displayed by antigen presenting cells (APC), a prerequisite for efficient T cell adaptive immunity against pathogens. Binding of alpha-beta TR to pMH complex initiates TR-CD3 clustering on the cell surface and intracellular activation of LCK that phosphorylates the ITAM motifs of CD3G, CD3D, CD3E and CD247 enabling the recruitment of ZAP70. In turn ZAP70 phosphorylates LAT, which recruits numerous signaling molecules to form the LAT signalosome. The LAT signalosome propagates signal branching to three major signaling pathways, the calcium, the mitogen-activated protein kinase (MAPK) kinase and the nuclear factor NF-kappa-B (NF-kB) pathways, leading to the mobilization of transcription factors that are critical for gene expression and essential for T cell growth and differentiation. The T cell repertoire is generated in the thymus, by V-(D)-J rearrangement. This repertoire is then shaped by intrathymic selection events to generate a peripheral T cell pool of self-MH restricted, non-autoaggressive T cells. Post-thymic interaction of alpha-beta TR with the pMH complexes shapes TR structural and functional avidity. The polypeptide is T cell receptor beta variable 7-2 (Homo sapiens (Human)).